The chain runs to 494 residues: Alpha-amylase B (494 aa).

Positions 1 to 18 (MFLAKSIVCLALLAVANA) are cleaved as a signal peptide. Gln19 carries the pyrrolidone carboxylic acid modification. Cysteines 46 and 102 form a disulfide. Ca(2+)-binding residues include Asn116, Arg165, and Asp174. Cys153 and Cys167 form a disulfide bridge. A chloride-binding site is contributed by Arg202. Asp204 functions as the Nucleophile in the catalytic mechanism. Position 208 (His208) interacts with Ca(2+). Glu241 serves as the catalytic Proton donor. Positions 304 and 343 each coordinate chloride. 2 disulfides stabilise this stretch: Cys376–Cys382 and Cys448–Cys460.

This sequence belongs to the glycosyl hydrolase 13 family. In terms of assembly, monomer. Requires Ca(2+) as cofactor. It depends on chloride as a cofactor.

The enzyme catalyses Endohydrolysis of (1-&gt;4)-alpha-D-glucosidic linkages in polysaccharides containing three or more (1-&gt;4)-alpha-linked D-glucose units.. This Drosophila melanogaster (Fruit fly) protein is Alpha-amylase B (Amy-d).